The primary structure comprises 64 residues: Beta-insect excitatory toxin OdTx12 (64 aa).

Residues 1–59 enclose the LCN-type CS-alpha/beta domain; that stretch reads QSTGGKAPECLLSNYCNNECTKVHYADKGYCCLLSCYCFGLSDDKKVLEISDSRKKYCD. Cystine bridges form between Cys-10–Cys-31, Cys-16–Cys-36, Cys-20–Cys-38, and Cys-32–Cys-58.

This sequence belongs to the long (4 C-C) scorpion toxin superfamily. Sodium channel inhibitor family. Beta subfamily. Expressed by the venom gland.

It localises to the secreted. Functionally, excitatory insect beta-toxins induce a spastic paralysis. They bind voltage-independently at site-4 of sodium channels (Nav) and shift the voltage of activation toward more negative potentials thereby affecting sodium channel activation and promoting spontaneous and repetitive firing. In vivo, this recombinant protein is lethal to Locusta migratoria larvae after injection, but has no significant effect when orally administered. Is not toxic to mice after intracerebroventricular injection. The chain is Beta-insect excitatory toxin OdTx12 from Odontobuthus doriae (Yellow Iranian scorpion).